The chain runs to 862 residues: Cell surface glycoprotein (862 aa).

Residues 1 to 34 (MTDTQQKIKAVLLTVLMVTSVFAATIAFSGAAAA) form the signal peptide. 3 disordered regions span residues 35 to 60 (SERG…SAGN), 101 to 126 (ILLE…EGTE), and 200 to 220 (VNTN…DRDD). Residues 43 to 57 (YTTGPTDGNQDNVDS) show a composition bias toward polar residues. Basic and acidic residues predominate over residues 206-220 (NDDHPNPAADGDRDD). N-linked (GlcNAc...) asparagine glycosylation is found at Asn442, Asn520, Asn550, Asn702, and Asn761. The interval 752 to 838 (LSDENVEPGN…TEEATTEATG (87 aa)) is disordered. Residues 784 to 801 (SLEEEQPATDTPEPDTDT) show a composition bias toward acidic residues. A compositionally biased stretch (low complexity) spans 802–815 (PEPATDTPEPATDT). Positions 816-833 (PEPDTDTPEPDTETEEAT) are enriched in acidic residues. The helical transmembrane segment at 838–858 (GPGFTAAIALIALVAAALLAV) threads the bilayer. Positions 839 to 841 (PGF) match the PGF sorting signal motif.

It belongs to the halobacterial S-layer protein family. In terms of processing, glycosylated. Cleaved by the archaeosortase ArtA at the C-terminus, with removal of a short hydrophobic segment. Post-translationally, lipidation.

It is found in the secreted. Its subcellular location is the cell wall. The protein localises to the S-layer. It localises to the cell membrane. In terms of biological role, S-layer protein. The S-layer is a paracrystalline mono-layered assembly of proteins which coat the surface of the cell. This Haloarcula japonica (strain ATCC 49778 / DSM 6131 / JCM 7785 / NBRC 101032 / NCIMB 13157 / TR-1) protein is Cell surface glycoprotein.